A 5430-amino-acid chain; its full sequence is MSSSDEETLSERSCRSERSCRSERSYRSERSGSLSPCPPGDTLPWNLPLHEQKKRKSQDSVLDPAERAVVRVADERDRVQKKTFTKWVNKHLMKVRKHINDLYEDLRDGHNLISLLEVLSGIKLPREKGRMRFHRLQNVQIALDFLKQRQVKLVNIRNDDITDGNPKLTLGLIWTIILHFQISDIYISGESGDMSAKEKLLLWTQKVTAGYTGIKCTNFSSCWSDGKMFNALIHRYRPDLVDMERVQIQSNRENLEQAFEVAERLGVTRLLDAEDVDVPSPDEKSVITYVSSIYDAFPKVPEGGEGISATEVDSRWQEYQSRVDSLIPWIRQHTILMSDKSFPQNPVELKALYNQYIHFKETEILAKEREKGRIKELYKLLEVWIEFGRIKLPQGYHPNHVEEEWGKLIVEMLEREKSLRPAVERLELLLQIANKIQNGALNCEEKLTLAKNTLQADAAHLESGQPVQCESDVIMYIQECEGLIRQLQVDLQILRDEKYYQLEELAFRVMRLQDELVTLRLECTNLYRKGHFTSLELVPPSTLTTTHLKAEPLNKTTHSSSTSWFRKPMTRTELVAISSSEDEGSLRFVYELLSWVEEMQMKLERAEWGNDLPSVELQWETQQHIHTSVEELGSSVKEARLYEGKMSQNFHTSYVETLGKLETQYCKLKETSSFRMRHLQSLHKFVSKATAELIWLNGKEEEELACDWSDSNPNISAKKAYFSELTMELEGKQDVFRSLQDTAELLSLENHPAKQTVEAYSAAVQSQLQWMKQLCLCVEQHIKENAAYFQFFSDARDLESFLRNLQDSIKRKYTCDHNTSLSRLEDLLQDSMDEKEQLIQSKSSVASLVGRSKTIVQLKPRNPDHVLKSTLSVKAICDYRQIEITICKNDECVLEDNSQRTKWKVISPTGNEAMVPSVCLLIPPPNTEAIDVASRVEQSYQKVMALWHQLHINTKSLISWNYLRKDIDAVQTWNLEKLRSSAPGECHQVMKNLQAHYEDFLQDSHDSALFSVADRLRIEEEVEACKTHFQQLMESMENEDKEETLAKVYISELKNIRLRLEECEQRLLKQIQSSASSKTDRDARQDVALRIAEQEHVQEDLKHLRSDLDAVSVKCTTFLQQSPSGSSATTLRSELNLMVEKMDHVYGLSIVCLNKLKTIDVIVRSIQDAELLVKGYEIKLSQEEAVPADLSALESHRTTLQHWLSDVKDKNSVFSVLDEEISKAKAVAEQLHHRAAEPNLDLERYQEKGSQLQERWHRVIAQLETRQSEVESIQEVLRDYRACHGTLIKWIEETTAQQEMMKPGQAEDSRVLSEQLSQQTELFAEIERNQTKLDQCQKLSQQYSTTVKDYELQLMTYKAFVESQQKSPGKRRRMISSSDAITQEFMDLRTRYTALVTLTTQHVKYISDALRRLEEEEKVVEEEKQEHVEKVKDLLGWVSTLARNTQGTTTSSRTSASTDIEKAILEQQVLAEELTTKKEQVSEAIKTSQIFLAKHGHKLSEREKEQISEQLCALNKTYHDLCDGSANQLQQLQSELAQQTEQKTLQKQQDTCHKKLEDLRSWVRQAERALERHRGRASQQELSALQQNQSDLKDLQGDIQNHSTSFATAVKDIEGFLEENQNKLSPQELTALREKLYQAKEQYEGLQDRTREAQKELEEAVTSALQQETEKSKAATELAENRRKIDALLDWVTSVGSSDRQPQTSLPGTEQFSGACLEKQTLDATDGCVDVNQVPEKLDRQYELMKARHQELLSQQQNFIVATQSAQSFLDQHSHNLTPEERQMLQEKLGELKEQYAASLAQSEAKLRQTQTLRDELQKFLQDHREFENWLERSENELDGMHTGGSSPEALNSLLKRQGSFSEDVISHKGDLRFVTISGQKVLETENNFEEGQEPSPTRNLVNEKLKDATERYTTLHSKCTRLGSHLNMLLGQYQQFQSSADSLQAWMLTCEASVEKLLSDTVASDPGILQQQLATTKQLQEELAEHQVPVEKLQKAAHDLMDIEGEPSLDCTPIRETTESIFSRFQSLSCSLAERSALLQKAIAQSQSVQESMESLLQSMKEVEQNLEGEQVAALSSGLIQEALANNMKLKQDIARQKSSLEATREMVTRFMETADGNSAAVLQDRLAELSQRFHRLQLQQQEKESGLKKLLPQAETFEQLSSKLQQFVEHKNRLLASGNQPDQDIAHFSQHIQELTLEMEDQKENLGTLEHLVTALGSCGFALDLSQHQEKIQNLKKDFTELQKTVQEREKDASNCQEQLDEFRKLIRTFQKWLKETEGNVPPAETFVSAKELEKQIEHLKGLLDDWAGKGVLVEEINTKGTALESLIMDITAPDSQAKTGSVLPSVGSSVGSVNGYHTCKDLTEIQCDMSDVNSKYDKLGDALRERQESLQTVLSRMEEVQKEASSVLQWLESKEEVLKGMDASLSPTKTETVKAQAESNKAFLAELEQNSPKIQKVKEALAGLLEAYPNSQEAENWRKMQEDLNSRWEKATEVTVARQKQLEESASHLACFQAAESQLRPWLMEKELMMGVLGPLSIDPNMLNAQKQQVQFMLKEFEARRQQHEQLTEAAQGILTGPGDVSPSASQVHKDLQSISQKWVELTDKLNSRSTQIDQAIVKSTQYQDLLQDLSEKVKAVGQRLSGQSAISTQPDAVKQQLEETSEIRSDLGQLDDEMKEAQTLCQELSLLIGEQYLKDELKKRLETVALPLQGLEDLAADRMNRLQAALASTQQFQQMFDELRTWLDEKQSQQAKNCPISAKLERLQSQLQENEEFQKNLNQHSGSYEVIVAEGESLLLSVPPGEEKKTLQNQLVELKSHWEDLNKKTVDRQSRLKDCMQKAQKYQWHVEDLVPWIKDCKSKMSELQVTLDPVQLESSLLRSKAMLNEAEKRRSLLEILNSAADILINSSEIDEDEIRDEKAGLNQNMDAITEELQAKTGSLEEMTQRLKEFQESFKNIEKKVEGAKHQLEIFDALGSQACSNKNLEKLKAQREVLQALDPQVDYLRDFTRGLVEDAPDGSDASPLVHQAELAQQEFLEVKQRVNSSCLTMENKLEGIGQFHCRVREMFSQLADLDDELDGMGAIGRDTDSLQSQIEDIRLFLNKIQALRLDIEDSEAECRKMLEEEGTLDLLGLKRELEALNKQCGKLTERGKARQEQLELTLGRVEDFYSKLKALNDAATAAEEGEALQWIVGTEVDVINQQLADFKMFQKEQVDPLQVKLQQVNGLGQGLIQSAGKTCDVQGLEHDMEEVNTRWNTLNKKVAQRIAQLQEALLHCGKFQDALEPLLSWLTDTEELIANQKPPSAEYKVVKAQIQEQKLLQRLLDDRKATVDMLQAEGGRIAQAAELADREKITGQLESLECRWTELLSKAAARQKQLEDILVLAKQFHETAEPISDFLSVTEKKLANSEPVGTQTAKIHQQIIRHKALEEEIENHAADVQQAVKIGQSLSSLICPAEQGIMSEKLDSLQARYSEIQDRCCRKASLLEQALFNARLFGEDEVEVLNWLAEVEDKLSAVFVKDYRQDVLQKQHADHLALNEEIINRKKNVDQAIKNGQALLKQTTGEEVLLIQEKLDGIKTRYADITVTSSKALRTLEQARQLATKFHSTYEELTGWLREVEEELAASGGQSPTGEQIPQFQQRQKELKKEVMEHRLVLDTVNEVSHALLELVPWRAREGLDKLVSDANEQYKLVSDTVGQRVDEIDAAIQRSQQYEQAADAELAWVAETKRKLMALGPIRLEQDQTTAQLQVQKAFSIDIIRHKDSMDELFSHRGEIFSTCGEEQKAVLQEKTECLIQQYEAVSLLNSERYARLERAQVLVNQFWETYEELSPWAEETLALIAQLPPPAVDHEQLRQQQEEMRQLRESIAEHKPHIDKILKIGPQLKELNPEEGKMVEEKYQKAENMYAQIKDEVRQRALALDEAVSQSAQIAEFHDKIEPMLETLENLSSRLRMPPLIPAEVDKIRECISDNKSATMELEKLQPSFEALKRRGEELIGRSQGADKDLAAKEIQDKLDQMVFFWEDIKARSEEREIKFLDVLELAEKFWYDMAALLTTIKDTQEIVHDLESPGIDPSIIKQQVEAAETIKEETDGLHEELEFIRILGADLIFACGETEKPEVKKSIDEMNNAWENLNRTWKERLEKLEDAMQAAVQYQDTLQAMFDWLDNTVIRLCTMPPVGTDLNTVKDQLNEMKEFKVEVYQQQIEMEKLNHQGELMLKKATDETDRDIIREPLTELKHLWENLGEKIAHRQHKLEGALLALGQFQHALEELMGWLTHTEELLDAQRPISGDPKVIEVELAKHHVLKNDVLAHQATVETVNKAGNELLESSAGDDASSLRSRLETMNQCWESVLQKTEEREQQLQSTLQQAQGFHSEIEEFLLELNRMESQLSASKPTGGLPETAREQLDAHMELHSQLRAKEEIYNQLLDKGRLMLLSRGDSGSGSKTEQSVALLEQKWHVVSSKVEERKSKLEEALSLATEFQNSLQEFINWLTLAEQSLNIASPPSLILNTVLSQIEEHKVFANEVNAHRDQIIELDQTGNQLKFLSQKQDVVLIKNLLVSVQSRWEKVVQRSIERGRSLDDARKRAKQFHEAWKKLIDWLEDAESHLDSELEISNDPDKIKLQLSKHKEFQKTLGGKQPVYDTTIRTGRALKEKTLLADDAQKLDNLLGEVRDKWDTVCGKSVERQHKLEEALLFSGQFMDALQALVDWLYKVEPQLAEDQPVHGDLDLVMNLMDAHKVFQKELGKRTGTVQVLKRSGRELIESSRDDTTWVKGQLQELSTRWDTVCKLSVSKQSRLEQALKQAEEFRDTVHMLLEWLSEAEQTLRFRGALPDDTEALQSLIDTHKEFMKKVEEKRVDVNAAVAMGEVILAVCHPDCITTIKHWITIIRARFEEVLTWAKQHQQRLETALSELVANAELLEELLAWIQWAETTLIQRDQEPIPQNIDRVKALITEHQSFMEEMTRKQPDVDRVTKTYKRKNIEPTHAPFIEKSRSGSRKSLNQPTPPPMPILSQSEAKNPRINQLSARWQQVWLLALERQRKLNDALDRLEELKEFANFDFDVWRKKYMRWMNHKKSRVMDFFRRIDKDQDGKITRQEFIDGILASKFPTTKLEMTAVADIFDRDGDGYIDYYEFVAALHPNKDAYRPTTDADKIEDEVTRQVAQCKCAKRFQVEQIGENKYRFGDSQQLRLVRILRSTVMVRVGGGWMALDEFLVKNDPCRARGRTNIELREKFILPEGASQGMTPFRSRGRRSKPSSRAASPTRSSSSASQSNHSCTSMPSSPATPASGTKVISSTGSKLKRPTPTFHSSRTSLAGDTSNSSSPASTGAKTNRADPKKSASRPGSRAGSRAGSRASSRRGSDASDFDLLETQSACSDTSESSAAGGQGSSRRGLTKPSKIPTMSKKTTTASPRTPCPKR.

Residues 1–47 (MSSSDEETLSERSCRSERSCRSERSYRSERSGSLSPCPPGDTLPWNL) are disordered. The tract at residues 1–295 (MSSSDEETLS…VITYVSSIYD (295 aa)) is actin-binding. At S4 the chain carries Phosphoserine. Basic and acidic residues predominate over residues 9 to 30 (LSERSCRSERSCRSERSYRSER). Residues S35 and S57 each carry the phosphoserine modification. Calponin-homology (CH) domains are found at residues 78-181 (RVQK…LHFQ) and 194-298 (MSAK…DAFP). LRR repeat units follow at residues 148-171 (QRQV…LTLG) and 240-264 (LVDM…VAER). A Phosphoserine modification is found at S280. LRR repeat units lie at residues 377–399 (LYKL…YHPN) and 441–464 (LNCE…LESG). One can recognise an SH3 domain in the interval 868-925 (KSTLSVKAICDYRQIEITICKNDECVLEDNSQRTKWKVISPTGNEAMVPSVCLLIPPP). One copy of the LRR 5 repeat lies at 1050–1073 (ISELKNIRLRLEECEQRLLKQIQS). Position 1122 is a phosphoserine (S1122). LRR repeat units lie at residues 1128–1154 (ATTL…VCLN), 1187–1210 (PADL…VKDK), and 1257–1282 (HRVI…DYRA). Phosphoserine is present on residues S1367 and S1376. 2 LRR repeats span residues 1579–1602 (QQEL…IQNH) and 1629–1653 (LTAL…TREA). Spectrin repeat units lie at residues 1816–1891 (ELQK…NFEE) and 1933–2041 (QYQQ…ALLQ). A Phosphoserine modification is found at S1860. An LRR 11 repeat occupies 1869–1891 (KGDLRFVTISGQKVLETENNFEE). LRR repeat units follow at residues 2058-2083 (LQSM…LIQE) and 2194-2220 (IQEL…ALGS). The Spectrin 3 repeat unit spans residues 2399 to 2507 (RMEEVQKEAS…TVARQKQLEE (109 aa)). Phosphoserine occurs at positions 2429 and 2454. LRR repeat units follow at residues 2444–2467 (KAFL…LAGL), 2534–2557 (GVLG…QFML), and 2702–2725 (KKRL…RMNR). 2 Spectrin repeats span residues 2733 to 2837 (TQQF…SRLK) and 2842 to 2945 (KAQK…SLEE). Residues S2769 and S2895 each carry the phosphoserine modification. LRR repeat units lie at residues 2984–3009 (NKNL…YLRD), 3105–3127 (NKIQ…MLEE), and 3214–3237 (KEQV…LIQS). 13 Spectrin repeats span residues 3169 to 3274 (EDFY…QLQE), 3281 to 3383 (KFQD…QLED), 3388 to 3491 (AKQF…SLLE), 3714 to 3818 (RSQQ…ARLE), 3825 to 3927 (NQFW…ALDE), 4047 to 4152 (LAEK…KLED), 4157 to 4261 (AVQY…HKLE), 4267 to 4370 (LGQF…QQLQ), 4375 to 4481 (QAQG…KLEE), 4486 to 4589 (ATEF…RSLD), 4594 to 4700 (RAKQ…KLEE), 4707 to 4808 (QFMD…RLEQ), and 4812 to 4916 (QAEE…QRLE). The residue at position 3368 (T3368) is a Phosphothreonine. LRR repeat units follow at residues 3737–3761 (MALG…AFSI) and 3846–3870 (AQLP…QLRE). At S4074 the chain carries Phosphoserine. K4252 bears the N6-acetyllysine mark. The stretch at 4538-4561 (RDQIIELDQTGNQLKFLSQKQDVV) is one LRR 22 repeat. Residues 4993–5023 (PTHAPFIEKSRSGSRKSLNQPTPPPMPILSQ) are disordered. S5009 is subject to Phosphoserine. 2 consecutive EF-hand domains span residues 5083-5118 (HKKS…SKFP) and 5119-5154 (TTKL…NKDA). Ca(2+)-binding residues include D5096, D5098, D5100, K5102, E5107, D5132, D5134, D5136, Y5138, and E5143. Residues 5159–5231 (TDADKIEDEV…EFLVKNDPCR (73 aa)) enclose the GAR domain. Positions 5159–5430 (TDADKIEDEV…ASPRTPCPKR (272 aa)) are C-terminal tail. The disordered stretch occupies residues 5247–5430 (PEGASQGMTP…ASPRTPCPKR (184 aa)). A compositionally biased stretch (low complexity) spans 5267 to 5301 (SSRAASPTRSSSSASQSNHSCTSMPSSPATPASGT). T5296 carries the post-translational modification Phosphothreonine. A compositionally biased stretch (polar residues) spans 5317-5341 (TFHSSRTSLAGDTSNSSSPASTGAK). Phosphoserine occurs at positions 5321 and 5334. Residues 5352 to 5366 (SRPGSRAGSRAGSRA) are compositionally biased toward low complexity. Residues 5355–5370 (GSRAGSRAGSRASSRR) are 4 X 4 AA tandem repeats of [GS]-S-R-[AR]. A phosphoserine mark is found at S5372 and S5375. The segment covering 5381-5391 (ETQSACSDTSE) has biased composition (polar residues). Residues 5392-5403 (SSAAGGQGSSRR) show a composition bias toward low complexity.

This sequence belongs to the plakin or cytolinker family. As to quaternary structure, interacts with MAPRE1, CLASP1, CLASP2 and GOLGA4. Interacts with AXIN1 and LRP6. Found in a complex composed of MACF1, APC; AXIN1, CTNNB1 and GSK3B. Interacts with CAMSAP3. Phosphorylated on serine residues in the C-terminal tail by GSK3B. Phosphorylation inhibits microtubule-binding and this plays a critical role in bulge stem cell migration and skin wound repair. Wnt-signaling can repress phosphorylation.

The protein resides in the cytoplasm. The protein localises to the cytoskeleton. Its subcellular location is the golgi apparatus. It is found in the cell membrane. It localises to the cell projection. The protein resides in the ruffle membrane. The protein localises to the membrane. Its function is as follows. F-actin-binding protein which plays a role in cross-linking actin to other cytoskeletal proteins and also binds to microtubules. Plays an important role in ERBB2-dependent stabilization of microtubules at the cell cortex. Acts as a positive regulator of Wnt receptor signaling pathway and is involved in the translocation of AXIN1 and its associated complex (composed of APC, CTNNB1 and GSK3B) from the cytoplasm to the cell membrane. Has actin-regulated ATPase activity and is essential for controlling focal adhesions (FAs) assembly and dynamics. Interaction with CAMSAP3 at the minus ends of non-centrosomal microtubules tethers microtubules minus-ends to actin filaments, regulating focal adhesion size and cell migration. May play role in delivery of transport vesicles containing GPI-linked proteins from the trans-Golgi network through its interaction with GOLGA4. Plays a key role in wound healing and epidermal cell migration. Required for efficient upward migration of bulge cells in response to wounding and this function is primarily rooted in its ability to coordinate microtubule dynamics and polarize hair follicle stem cells. As a regulator of actin and microtubule arrangement and stabilization, it plays an essential role in neurite outgrowth, branching and spine formation during brain development. The protein is Microtubule-actin cross-linking factor 1 of Rattus norvegicus (Rat).